Reading from the N-terminus, the 65-residue chain is MTKKLTIVKCPRCGTDVEWGEQSPHRPFCSKQCQMIDFGEWADEEKAIPGAPDMSDSDGWSEDQY.

Residues Cys10, Cys13, Cys29, and Cys33 each coordinate Zn(2+). Positions 45–65 are disordered; the sequence is EKAIPGAPDMSDSDGWSEDQY. Acidic residues predominate over residues 55–65; the sequence is SDSDGWSEDQY.

It belongs to the DNA gyrase inhibitor YacG family. Interacts with GyrB. The cofactor is Zn(2+).

Inhibits all the catalytic activities of DNA gyrase by preventing its interaction with DNA. Acts by binding directly to the C-terminal domain of GyrB, which probably disrupts DNA binding by the gyrase. The chain is DNA gyrase inhibitor YacG from Vibrio cholerae serotype O1 (strain ATCC 39315 / El Tor Inaba N16961).